Reading from the N-terminus, the 396-residue chain is 1-deoxy-D-xylulose 5-phosphate reductoisomerase (396 aa).

NADPH contacts are provided by Thr10, Gly11, Ser12, Ile13, Gly36, Lys37, Asn38, and Asn124. Residue Lys125 coordinates 1-deoxy-D-xylulose 5-phosphate. Residue Glu126 coordinates NADPH. Asp150 contacts Mn(2+). Ser151, Glu152, Ser186, and His209 together coordinate 1-deoxy-D-xylulose 5-phosphate. Glu152 provides a ligand contact to Mn(2+). Residue Gly215 participates in NADPH binding. Ser222, Asn227, Lys228, and Glu231 together coordinate 1-deoxy-D-xylulose 5-phosphate. Glu231 serves as a coordination point for Mn(2+).

The protein belongs to the DXR family. Mg(2+) is required as a cofactor. Mn(2+) serves as cofactor.

It carries out the reaction 2-C-methyl-D-erythritol 4-phosphate + NADP(+) = 1-deoxy-D-xylulose 5-phosphate + NADPH + H(+). It participates in isoprenoid biosynthesis; isopentenyl diphosphate biosynthesis via DXP pathway; isopentenyl diphosphate from 1-deoxy-D-xylulose 5-phosphate: step 1/6. Its function is as follows. Catalyzes the NADPH-dependent rearrangement and reduction of 1-deoxy-D-xylulose-5-phosphate (DXP) to 2-C-methyl-D-erythritol 4-phosphate (MEP). The polypeptide is 1-deoxy-D-xylulose 5-phosphate reductoisomerase (Haemophilus ducreyi (strain 35000HP / ATCC 700724)).